The following is a 379-amino-acid chain: Protein hairy (379 aa).

The segment at 20 to 50 (STQQQQQQQQHKEAPIKSDRRSNKPIMEKRR) is disordered. Positions 29–47 (QHKEAPIKSDRRSNKPIME) are enriched in basic and acidic residues. Positions 36–55 (KSDRRSNKPIMEKRRRARIN) are interaction with Topors. Residues 38–95 (DRRSNKPIMEKRRRARINNCLNELKTLILDATKKDPARHSKLEKADILEKTVKHLQEL) enclose the bHLH domain. In terms of domain architecture, Orange spans 114-143 (FKAGFADCANEVSRFPGLDSTQRRRLLQHL). Disordered stretches follow at residues 167–208 (QSLH…NTTA) and 298–345 (QRTA…VKPS). 2 stretches are compositionally biased toward low complexity: residues 182-207 (PEQEPSVTPVAASGNNNSSSNNTNTT) and 301-328 (ASTGSASSHSSAGYESAPSSSSSRGSYA). Positions 376–379 (WRPW) match the WRPW motif motif.

Transcription repression requires formation of a complex with a corepressor protein (Groucho).

The protein localises to the nucleus. In terms of biological role, pair-rule protein that regulates embryonic segmentation and adult bristle patterning. Transcriptional repressor of genes that require a bHLH protein for their transcription (e.g. ftz). The polypeptide is Protein hairy (Drosophila virilis (Fruit fly)).